Consider the following 376-residue polypeptide: Erythronate-4-phosphate dehydrogenase (376 aa).

Substrate contacts are provided by serine 45 and threonine 67. An NAD(+)-binding site is contributed by aspartate 147. Residue arginine 209 is part of the active site. Aspartate 233 is an NAD(+) binding site. Glutamate 238 is a catalytic residue. The Proton donor role is filled by histidine 255. Glycine 258 is an NAD(+) binding site. Residue tyrosine 259 participates in substrate binding.

Belongs to the D-isomer specific 2-hydroxyacid dehydrogenase family. PdxB subfamily. As to quaternary structure, homodimer.

It localises to the cytoplasm. The enzyme catalyses 4-phospho-D-erythronate + NAD(+) = (R)-3-hydroxy-2-oxo-4-phosphooxybutanoate + NADH + H(+). Its pathway is cofactor biosynthesis; pyridoxine 5'-phosphate biosynthesis; pyridoxine 5'-phosphate from D-erythrose 4-phosphate: step 2/5. Catalyzes the oxidation of erythronate-4-phosphate to 3-hydroxy-2-oxo-4-phosphonooxybutanoate. The protein is Erythronate-4-phosphate dehydrogenase of Shewanella baltica (strain OS155 / ATCC BAA-1091).